The chain runs to 1997 residues: Otoferlin (1997 aa).

The C2 1 domain occupies 1–98 (MALIVHLKTV…VEENRVEVTD (98 aa)). Topologically, residues 1–1963 (MALIVHLKTV…ARYFLWHTYR (1963 aa)) are cytoplasmic. Positions 140–167 (QEEKDSQETDGLLPGSRPSTRISGEKSF) are disordered. C2 domains lie at 235 to 356 (KRSK…HKWA) and 399 to 530 (IEGN…FLPT). Positions 643–692 (VDGMSRPLRPRPRKEPGDEEEVDLIQNSSDDEGDEAGDLASVSSTPPMRP) are disordered. Over residues 659–679 (GDEEEVDLIQNSSDDEGDEAG) the composition is skewed to acidic residues. Positions 791–820 (RERLKSCMRELESMGQQAKSLRAQVKRHTV) form a coiled coil. C2 domains are found at residues 943 to 1068 (LHSF…PPRF) and 1115 to 1241 (RGPI…PNWN). Residues Asp-975, Asp-981, Asp-1037, Asp-1039, and Asp-1045 each coordinate Ca(2+). Disordered regions lie at residues 1253 to 1272 (LRNG…SMEP), 1296 to 1326 (DVAE…ESML), and 1343 to 1402 (LRQH…EKKK). 2 stretches are compositionally biased toward acidic residues: residues 1314–1325 (EEPEEEEPDESM) and 1352–1361 (DLEEKEEMES). Residues 1370-1383 (KSKEKSRAAKEEKK) show a composition bias toward basic and acidic residues. C2 domains follow at residues 1464–1593 (LPED…ATCG) and 1714–1865 (DMPA…KQCT). Asp-1508, Asp-1514, Asp-1563, Asp-1565, Asp-1571, Asp-1836, Ser-1839, and Asp-1842 together coordinate Ca(2+). Residues 1964-1984 (WLLLKFLLLFLLLLLFALFLY) traverse the membrane as a helical segment. The Extracellular portion of the chain corresponds to 1985–1997 (SLPGYLAKKILGA).

Belongs to the ferlin family. Interacts with SNAP25; the interaction is direct. Interacts with STX1; the interaction is direct. Interacts with RAB8B. Requires Ca(2+) as cofactor. In terms of tissue distribution, isoform 1 is expressed in cochlea and brain. Expressed in the cochlear and vestibular hair cells. Expressed in both inner and outer hair cells (IHCs and OHCs) and cochlear ganglions neurons at postnatal day 2 (P2) and 6 (P6). Expressed only in IHCs at postnatal day 60 (P60) (at protein level). Strongly expressed in brain and inner ear. In the inner ear, it is mainly expressed in the cochlear IHC and vestibular type I sensory hair cells. Weakly expressed in eye, heart, skeletal muscle, liver, kidney, lung and testis.

Its subcellular location is the cytoplasmic vesicle. The protein resides in the secretory vesicle. It is found in the synaptic vesicle membrane. The protein localises to the basolateral cell membrane. It localises to the endoplasmic reticulum membrane. Its subcellular location is the golgi apparatus membrane. The protein resides in the presynaptic cell membrane. It is found in the cell membrane. In terms of biological role, key calcium ion sensor involved in the Ca(2+)-triggered synaptic vesicle-plasma membrane fusion and in the control of neurotransmitter release at these output synapses. Interacts in a calcium-dependent manner to the presynaptic SNARE proteins at ribbon synapses of cochlear inner hair cells (IHCs) to trigger exocytosis of neurotransmitter. Also essential to synaptic exocytosis in immature outer hair cells (OHCs). May also play a role within the recycling of endosomes. In Mus musculus (Mouse), this protein is Otoferlin (Otof).